The following is a 342-amino-acid chain: Cyclin-dependent kinase-like 4 (342 aa).

The 283-residue stretch at 4-286 (YEKLAKIGEG…CAQLLDSAYF (283 aa)) folds into the Protein kinase domain. ATP is bound by residues 10 to 18 (IGEGSYGVV) and Lys33. Residues 45 to 51 (RKIALRE) carry the [NKR]KIAxRE motif. Catalysis depends on Asp126, which acts as the Proton acceptor. The interval 295 to 328 (KRKARSEGRSRRRQQNQLLPLIPGSHISPTPDGR) is disordered.

Belongs to the protein kinase superfamily. CMGC Ser/Thr protein kinase family. CDC2/CDKX subfamily.

It localises to the cytoplasm. The catalysed reaction is L-seryl-[protein] + ATP = O-phospho-L-seryl-[protein] + ADP + H(+). It carries out the reaction L-threonyl-[protein] + ATP = O-phospho-L-threonyl-[protein] + ADP + H(+). In Mus musculus (Mouse), this protein is Cyclin-dependent kinase-like 4 (Cdkl4).